The chain runs to 139 residues: MKKSTLLNSELSYLVATLGHTDEITICDAGLPIPDEVTRIDLALTHGVPSFLETVRVILSESQIESVIVAQEFAQVSPVLHEALYRELKAEEQLCGKPIAIQYISHEAFKQRTLQSRAVVRTGECTPYANVIFQAGVVF.

The active-site Proton donor is the His20. Substrate contacts are provided by residues Asp28, His106, and 128–130 (YAN).

The protein belongs to the RbsD / FucU family. RbsD subfamily. In terms of assembly, homodecamer.

It localises to the cytoplasm. It carries out the reaction beta-D-ribopyranose = beta-D-ribofuranose. The protein operates within carbohydrate metabolism; D-ribose degradation; D-ribose 5-phosphate from beta-D-ribopyranose: step 1/2. In terms of biological role, catalyzes the interconversion of beta-pyran and beta-furan forms of D-ribose. This is D-ribose pyranase from Vibrio cholerae serotype O1 (strain ATCC 39541 / Classical Ogawa 395 / O395).